A 341-amino-acid polypeptide reads, in one-letter code: MSTDKISVLLNWHATPYHLPIFVAQSKGFFAKEGIKVAILEPNDPSDVTELIGSGKADLGCKAMIHTLAGKARGFPIKSIGTLMDEPFTGVIYLEGSGITSDFRSLKGKRIGYVGEFGKIQIDELTKYYGMTSKDYTAVRCGMNVSKAIIEGTIDAGIGLENIQQVELEEWCKANNRPASDVKMLRIDELAELGCCCFCSILYIANEDWLKDHPKETAAFMRAVKAGADAMFADPRGSWAEYCKVKPAMNTPLNRIMFDRSFNYMSQDLINVSRDWNKVTNYSKRLGIVPEDFVSNYTNEFVQWEVAPEGGEAEGLAKQQEMKTLQAHVAEHGGVLQAVTA.

N6-(pyridoxal phosphate)lysine is present on Lys62. The active site involves His66. Residue 115-118 coordinates pyridoxal 5'-phosphate; the sequence is GEFG. The CCCFC; essential for catalytic activity, may be the site of iron coordination motif lies at 195–199; it reads CCCFC.

Belongs to the NMT1/THI5 family. In terms of assembly, homodimer. Fe cation is required as a cofactor.

The enzyme catalyses N(6)-(pyridoxal phosphate)-L-lysyl-[4-amino-5-hydroxymethyl-2-methylpyrimidine phosphate synthase] + L-histidyl-[4-amino-5-hydroxymethyl-2-methylpyrimidine phosphate synthase] + 2 Fe(3+) + 4 H2O = L-lysyl-[4-amino-5-hydroxymethyl-2-methylpyrimidine phosphate synthase] + (2S)-2-amino-5-hydroxy-4-oxopentanoyl-[4-amino-5-hydroxymethyl-2-methylpyrimidine phosphate synthase] + 4-amino-2-methyl-5-(phosphooxymethyl)pyrimidine + 3-oxopropanoate + 2 Fe(2+) + 2 H(+). It functions in the pathway cofactor biosynthesis; thiamine diphosphate biosynthesis. Responsible for the formation of the pyrimidine heterocycle in the thiamine biosynthesis pathway. Catalyzes the formation of hydroxymethylpyrimidine phosphate (HMP-P) from histidine and pyridoxal phosphate (PLP). The protein uses PLP and the active site histidine to form HMP-P, generating an inactive enzyme. The enzyme can only undergo a single turnover, which suggests it is a suicide enzyme. The chain is 4-amino-5-hydroxymethyl-2-methylpyrimidine phosphate synthase from Uromyces fabae (Rust fungus).